Consider the following 359-residue polypeptide: Dual-specificity RNA methyltransferase RlmN (359 aa).

E98 (proton acceptor) is an active-site residue. The region spanning E104–R329 is the Radical SAM core domain. Residues C111 and C340 are joined by a disulfide bond. The [4Fe-4S] cluster site is built by C118, C122, and C125. S-adenosyl-L-methionine contacts are provided by residues G166–E167, S198, S220–H222, and N297. Catalysis depends on C340, which acts as the S-methylcysteine intermediate.

This sequence belongs to the radical SAM superfamily. RlmN family. Requires [4Fe-4S] cluster as cofactor.

The protein resides in the cytoplasm. It carries out the reaction adenosine(2503) in 23S rRNA + 2 reduced [2Fe-2S]-[ferredoxin] + 2 S-adenosyl-L-methionine = 2-methyladenosine(2503) in 23S rRNA + 5'-deoxyadenosine + L-methionine + 2 oxidized [2Fe-2S]-[ferredoxin] + S-adenosyl-L-homocysteine. It catalyses the reaction adenosine(37) in tRNA + 2 reduced [2Fe-2S]-[ferredoxin] + 2 S-adenosyl-L-methionine = 2-methyladenosine(37) in tRNA + 5'-deoxyadenosine + L-methionine + 2 oxidized [2Fe-2S]-[ferredoxin] + S-adenosyl-L-homocysteine. In terms of biological role, specifically methylates position 2 of adenine 2503 in 23S rRNA and position 2 of adenine 37 in tRNAs. m2A2503 modification seems to play a crucial role in the proofreading step occurring at the peptidyl transferase center and thus would serve to optimize ribosomal fidelity. The sequence is that of Dual-specificity RNA methyltransferase RlmN from Halorhodospira halophila (strain DSM 244 / SL1) (Ectothiorhodospira halophila (strain DSM 244 / SL1)).